Here is a 359-residue protein sequence, read N- to C-terminus: Histidinol-phosphate aminotransferase (359 aa).

At lysine 217 the chain carries N6-(pyridoxal phosphate)lysine.

It belongs to the class-II pyridoxal-phosphate-dependent aminotransferase family. Histidinol-phosphate aminotransferase subfamily. As to quaternary structure, homodimer. Pyridoxal 5'-phosphate is required as a cofactor.

It carries out the reaction L-histidinol phosphate + 2-oxoglutarate = 3-(imidazol-4-yl)-2-oxopropyl phosphate + L-glutamate. Its pathway is amino-acid biosynthesis; L-histidine biosynthesis; L-histidine from 5-phospho-alpha-D-ribose 1-diphosphate: step 7/9. This chain is Histidinol-phosphate aminotransferase, found in Salmonella paratyphi A (strain ATCC 9150 / SARB42).